The chain runs to 477 residues: UDP-glycosyltransferase 71K1 (477 aa).

UDP-alpha-D-glucose contacts are provided by residues serine 285, 350–351 (WA), 368–376 (HCGWNSILE), and 390–393 (YAEQ).

The protein belongs to the UDP-glycosyltransferase family.

In terms of biological role, glycosyltransferase that possesses chalcone and flavonol 2'-O-glycosyltransferase activity. Converts phloretin to phlorizin (phloretin 2'-O-glucoside), a potent antioxidant. Possesses glycosyltransferase activity toward quercetin, isoliquiritigenin, butein and caffeic acid. This Malus domestica (Apple) protein is UDP-glycosyltransferase 71K1.